The chain runs to 425 residues: Protein disulfide isomerase-like 5-3 (425 aa).

The N-terminal stretch at 1–28 (MGKPTLPPVVVVVVLLLLVVVLPATTCG) is a signal peptide. One can recognise a Thioredoxin domain in the interval 29-153 (ADAGGGGEAE…LVENLKKLVA (125 aa)). Catalysis depends on nucleophile residues Cys75 and Cys78. The cysteines at positions 75 and 78 are disulfide-linked. A helical transmembrane segment spans residues 386–406 (LLGVNAVYILVFLVAVLVLLM).

Belongs to the protein disulfide isomerase family.

It is found in the membrane. In terms of biological role, acts as a protein-folding catalyst that interacts with nascent polypeptides to catalyze the formation, isomerization, and reduction or oxidation of disulfide bonds. May play a role in storage protein biogenesis. This chain is Protein disulfide isomerase-like 5-3 (PDIL5-3), found in Oryza sativa subsp. japonica (Rice).